The sequence spans 141 residues: Hemoglobin subunit alpha (141 aa).

The Globin domain maps to 1-141 (VLSPGDKSNI…VSTVLTSKYR (141 aa)). Ser3 is modified (phosphoserine). Residues Lys7 and Lys11 each carry the N6-succinyllysine modification. Lys16 carries the N6-acetyllysine; alternate modification. The residue at position 16 (Lys16) is an N6-succinyllysine; alternate. At Tyr24 the chain carries Phosphotyrosine. Ser35 is modified (phosphoserine). Residue Lys40 is modified to N6-succinyllysine. Ser49 carries the phosphoserine modification. His58 serves as a coordination point for O2. His87 serves as a coordination point for heme b. Ser102 is modified (phosphoserine). Residue Thr108 is modified to Phosphothreonine. Ser124 carries the phosphoserine modification. A phosphothreonine mark is found at Thr134 and Thr137. Phosphoserine is present on Ser138.

This sequence belongs to the globin family. In terms of assembly, heterotetramer of two alpha chains and two beta chains. In terms of tissue distribution, red blood cells.

Involved in oxygen transport from the lung to the various peripheral tissues. In terms of biological role, hemopressin acts as an antagonist peptide of the cannabinoid receptor CNR1. Hemopressin-binding efficiently blocks cannabinoid receptor CNR1 and subsequent signaling. This Tupaia glis (Common tree shrew) protein is Hemoglobin subunit alpha (HBA).